Reading from the N-terminus, the 372-residue chain is DNA replication and repair protein RecF (372 aa).

Residue Gly-30–Thr-37 participates in ATP binding.

The protein belongs to the RecF family.

The protein localises to the cytoplasm. The RecF protein is involved in DNA metabolism; it is required for DNA replication and normal SOS inducibility. RecF binds preferentially to single-stranded, linear DNA. It also seems to bind ATP. The polypeptide is DNA replication and repair protein RecF (Anaeromyxobacter dehalogenans (strain 2CP-1 / ATCC BAA-258)).